A 218-amino-acid polypeptide reads, in one-letter code: Adenylate kinase (218 aa).

Glycine 10 to threonine 15 provides a ligand contact to ATP. The tract at residues serine 30–valine 59 is NMP. Residues threonine 31, arginine 36, lysine 57 to valine 59, glycine 85 to arginine 88, and glutamine 92 contribute to the AMP site. The interval glycine 122–aspartate 159 is LID. ATP is bound by residues arginine 123 and threonine 132 to tyrosine 133. AMP contacts are provided by arginine 156 and arginine 167. Glycine 203 is a binding site for ATP.

Belongs to the adenylate kinase family. As to quaternary structure, monomer.

It is found in the cytoplasm. It catalyses the reaction AMP + ATP = 2 ADP. The protein operates within purine metabolism; AMP biosynthesis via salvage pathway; AMP from ADP: step 1/1. Functionally, catalyzes the reversible transfer of the terminal phosphate group between ATP and AMP. Plays an important role in cellular energy homeostasis and in adenine nucleotide metabolism. In Chlorobium phaeobacteroides (strain BS1), this protein is Adenylate kinase.